The chain runs to 337 residues: Glyceraldehyde-3-phosphate dehydrogenase (337 aa).

NAD(+) contacts are provided by residues 13 to 14, aspartate 35, and arginine 80; that span reads RI. D-glyceraldehyde 3-phosphate-binding positions include 150–152, threonine 181, 210–211, and arginine 233; these read SCT and TG. Cysteine 151 serves as the catalytic Nucleophile. Asparagine 315 provides a ligand contact to NAD(+).

This sequence belongs to the glyceraldehyde-3-phosphate dehydrogenase family. In terms of assembly, homotetramer.

It localises to the cytoplasm. The enzyme catalyses D-glyceraldehyde 3-phosphate + phosphate + NAD(+) = (2R)-3-phospho-glyceroyl phosphate + NADH + H(+). Its pathway is carbohydrate degradation; glycolysis; pyruvate from D-glyceraldehyde 3-phosphate: step 1/5. The chain is Glyceraldehyde-3-phosphate dehydrogenase (GPDA) from Colletotrichum lindemuthianum (Bean anthracnose fungus).